Here is a 338-residue protein sequence, read N- to C-terminus: Aspartate carbamoyltransferase catalytic subunit (338 aa).

Carbamoyl phosphate contacts are provided by Arg72 and Thr73. Lys100 contacts L-aspartate. Positions 122, 152, and 155 each coordinate carbamoyl phosphate. Residues Arg186 and Arg243 each contribute to the L-aspartate site. Gly284 and Pro285 together coordinate carbamoyl phosphate.

The protein belongs to the aspartate/ornithine carbamoyltransferase superfamily. ATCase family. As to quaternary structure, heterododecamer (2C3:3R2) of six catalytic PyrB chains organized as two trimers (C3), and six regulatory PyrI chains organized as three dimers (R2).

It carries out the reaction carbamoyl phosphate + L-aspartate = N-carbamoyl-L-aspartate + phosphate + H(+). It participates in pyrimidine metabolism; UMP biosynthesis via de novo pathway; (S)-dihydroorotate from bicarbonate: step 2/3. Catalyzes the condensation of carbamoyl phosphate and aspartate to form carbamoyl aspartate and inorganic phosphate, the committed step in the de novo pyrimidine nucleotide biosynthesis pathway. This Acinetobacter baumannii (strain AB307-0294) protein is Aspartate carbamoyltransferase catalytic subunit.